Consider the following 414-residue polypeptide: uncharacterized protein (414 aa).

Residues 1 to 20 (MKKLLAIGILCIMVTAVMSG) form the signal peptide. C21 is lipidated: S-archaeol cysteine. Residues 119–389 (RVIVMSSTEI…DLATILHPEA (271 aa)) form the Fe/B12 periplasmic-binding domain.

It is found in the cell membrane. This is an uncharacterized protein from Methanocaldococcus jannaschii (strain ATCC 43067 / DSM 2661 / JAL-1 / JCM 10045 / NBRC 100440) (Methanococcus jannaschii).